A 141-amino-acid polypeptide reads, in one-letter code: Large ribosomal subunit protein uL11 (141 aa).

The protein belongs to the universal ribosomal protein uL11 family. In terms of assembly, part of the ribosomal stalk of the 50S ribosomal subunit. Interacts with L10 and the large rRNA to form the base of the stalk. L10 forms an elongated spine to which L12 dimers bind in a sequential fashion forming a multimeric L10(L12)X complex. One or more lysine residues are methylated.

Forms part of the ribosomal stalk which helps the ribosome interact with GTP-bound translation factors. This chain is Large ribosomal subunit protein uL11, found in Brevibacillus brevis (strain 47 / JCM 6285 / NBRC 100599).